The chain runs to 161 residues: uncharacterized protein (161 aa).

This is an uncharacterized protein from Haemophilus influenzae (strain ATCC 51907 / DSM 11121 / KW20 / Rd).